A 472-amino-acid polypeptide reads, in one-letter code: Regulator of G-protein signaling 6 (472 aa).

The 76-residue stretch at 40 to 115 folds into the DEP domain; the sequence is KTGGVPIRTV…DDGTFYRFQA (76 aa). The G protein gamma domain occupies 261–330; the sequence is IRKQITFLNA…MSKEPSQQRV (70 aa). In terms of domain architecture, RGS spans 336 to 441; it reads SFDEILKDQV…LMKSDSYARF (106 aa).

As to quaternary structure, interacts with GNB5. Interacts with RGS7BP, leading to regulate the subcellular location of the heterodimer formed with GNB5. Interacts with GNAI1.

Its subcellular location is the cytoplasm. It localises to the cytosol. The protein resides in the membrane. The protein localises to the nucleus. It is found in the cell membrane. Its function is as follows. Regulates G protein-coupled receptor signaling cascades. Inhibits signal transduction by increasing the GTPase activity of G protein alpha subunits, thereby driving them into their inactive GDP-bound form. The RGS6/GNB5 dimer enhances GNAO1 GTPase activity. In Homo sapiens (Human), this protein is Regulator of G-protein signaling 6 (RGS6).